The chain runs to 467 residues: Congo red hypersensitive protein 2 (467 aa).

The signal sequence occupies residues 1 to 23 (MAIVNSWLICLVSIFSFVVRVEA). N-linked (GlcNAc...) asparagine glycosylation is present at asparagine 28. A disulfide bridge connects residues cysteine 56 and cysteine 67. A GH16 domain is found at 63-280 (SHDSCMPVPI…WSGGEINWDA (218 aa)). Asparagine 96 carries N-linked (GlcNAc...) asparagine glycosylation. Glutamate 166 functions as the Nucleophile in the catalytic mechanism. The Proton donor role is filled by glutamate 170. Glutamate 170 contributes to the chitin binding site. Residues asparagine 190, asparagine 196, asparagine 233, and asparagine 237 are each glycosylated (N-linked (GlcNAc...) asparagine). Residue tryptophan 257 participates in chitin binding. An N-linked (GlcNAc...) asparagine glycan is attached at asparagine 261. Threonine 268 is a chitin binding site. N-linked (GlcNAc...) asparagine glycosylation is found at asparagine 297 and asparagine 310. Positions 337–444 (MDSDEGSGLD…SSSTSSMSGN (108 aa)) are disordered. The segment covering 351 to 444 (ATTSSTQKSS…SSSTSSMSGN (94 aa)) has biased composition (low complexity). Asparagine 445 is lipidated: GPI-anchor amidated asparagine. Positions 446–467 (AGANVAANWRLTVLCVILGYVL) are cleaved as a propeptide — removed in mature form.

This sequence belongs to the glycosyl hydrolase 16 family. CRH1 subfamily. In terms of processing, the GPI-anchor is attached to the protein in the endoplasmic reticulum and serves to target the protein to the cell surface. There, the glucosamine-inositol phospholipid moiety is cleaved off and the GPI-modified mannoprotein is covalently attached via its lipidless GPI glycan remnant to the 1,6-beta-glucan of the outer cell wall layer.

The protein localises to the secreted. The protein resides in the cell wall. It localises to the membrane. It carries out the reaction Random endo-hydrolysis of N-acetyl-beta-D-glucosaminide (1-&gt;4)-beta-linkages in chitin and chitodextrins.. Its function is as follows. Dual chitinase/transglycosylase that plays a role in cell wall architecture. Chitinase and transglycosylase activities are coupled. Required for the polysaccharide cross-linking at the septa and the cell wall. More specifically, transfers chitin to both beta(1-3)- and beta(1-6)glucan in the cell wall. The minimal number of intact hexopyranose units required in the molecule of the acceptor oligosaccharide is two and the effectivity of the acceptor increased with the increasing length of its oligosaccharide chain. The protein is Congo red hypersensitive protein 2 of Saccharomyces cerevisiae (strain ATCC 204508 / S288c) (Baker's yeast).